The chain runs to 157 residues: Histidine-containing phosphotransfer protein 5 (157 aa).

The residue at position 1 (methionine 1) is an N-acetylmethionine. Positions 41-148 constitute an HPt domain; that stretch reads TPDFVAEVVS…NLEKQILQAG (108 aa). Phosphohistidine is present on histidine 83.

In terms of assembly, interacts with the B-type response regulators ARR1 and ARR2. Binds to AHK2, AHK3, AHK4 and AHK5. In terms of processing, two-component system major event consists of a His-to-Asp phosphorelay between a sensor histidine kinase (HK) and a response regulator (RR). In plants, the His-to-Asp phosphorelay involves an additional intermediate named Histidine-containing phosphotransfer protein (HPt). This multistep phosphorelay consists of a His-Asp-His-Asp sequential transfer of a phosphate group between first a His and an Asp of the HK protein, followed by the transfer to a conserved His of the HPt protein and finally the transfer to an Asp in the receiver domain of the RR protein. In terms of tissue distribution, expressed in the whole plant.

Its subcellular location is the cytoplasm. The protein resides in the cytosol. It localises to the nucleus. Functionally, functions as a two-component phosphorelay mediator between cytokinin sensor histidine kinases and response regulators (B-type ARRs). Plays an important role in propagating cytokinin signal transduction through the multistep His-to-Asp phosphorelay. In Arabidopsis thaliana (Mouse-ear cress), this protein is Histidine-containing phosphotransfer protein 5 (AHP5).